An 874-amino-acid polypeptide reads, in one-letter code: Cap-specific mRNA (nucleoside-2'-O-)-methyltransferase 1A (874 aa).

Basic and acidic residues predominate over residues 1-10 (MSERGDDDRT). Residues 1 to 64 (MSERGDDDRT…APPTKQKTKA (64 aa)) form a disordered region. The G-patch domain occupies 60-106 (QKTKAEEMMERMGYKAGEGLGKNKQGIQEPVALSTQRGKTGLGHEGA). The RrmJ-type SAM-dependent 2'-O-MTase domain occupies 211–440 (FFQNRAAMKT…ERYITCKGLR (230 aa)). S-adenosyl-L-methionine-binding residues include G273 and D354. The active-site Proton acceptor is K394. Residues 535–555 (PNKQRPRGGDRGSRNGNQERL) form a disordered region.

The enzyme catalyses a 5'-end (N(7)-methyl 5'-triphosphoguanosine)-ribonucleoside in mRNA + S-adenosyl-L-methionine = a 5'-end (N(7)-methyl 5'-triphosphoguanosine)-(2'-O-methyl-ribonucleoside) in mRNA + S-adenosyl-L-homocysteine + H(+). In terms of biological role, S-adenosyl-L-methionine-dependent methyltransferase that mediates mRNA cap1 2'-O-ribose methylation to the 5'-cap structure of mRNAs. Methylates the ribose of the first nucleotide of a m(7)GpppG-capped mRNA to produce m(7)GpppNmp (cap1). Cap1 modification is linked to higher levels of translation. The protein is Cap-specific mRNA (nucleoside-2'-O-)-methyltransferase 1A of Caenorhabditis briggsae.